We begin with the raw amino-acid sequence, 449 residues long: Guanine/hypoxanthine permease GhxP (449 aa).

Over M1–V25 the chain is Cytoplasmic. The helical transmembrane segment at R26–M49 threads the bilayer. The Periplasmic segment spans residues L50 to A59. A helical membrane pass occupies residues V60–W78. The Cytoplasmic segment spans residues A79 to N80. The discontinuously helical transmembrane segment at L81–F97 threads the bilayer. Residues S98 to V109 lie on the Periplasmic side of the membrane. A helical membrane pass occupies residues A110–I129. Residues R130 to V141 lie on the Cytoplasmic side of the membrane. Residues A142 to G162 traverse the membrane as a helical segment. Over L163 to A180 the chain is Periplasmic. Residues T181–E198 form a helical membrane-spanning segment. Residues K199–V202 are Cytoplasmic-facing. Residues P203–P222 form a helical membrane-spanning segment. The Periplasmic portion of the chain corresponds to N223–N254. A helical membrane pass occupies residues P255–A283. Topologically, residues N284–G296 are cytoplasmic. Residues K297–V312 traverse the membrane as a helical segment. Topologically, residues G313 to A314 are periplasmic. Residues A315–G330 traverse the membrane as a discontinuously helical segment. Topologically, residues G331–G334 are cytoplasmic. The chain crosses the membrane as a helical span at residues L335–F349. Over L350–Y360 the chain is Periplasmic. A helical membrane pass occupies residues A361–I380. At D381–F385 the chain is on the cytoplasmic side. The segment at residues V386 to V421 is an intramembrane region (discontinuously helical). Over S422 to I449 the chain is Cytoplasmic.

This sequence belongs to the nucleobase:cation symporter-2 (NCS2) (TC 2.A.40) family. Azg-like subfamily.

The protein localises to the cell inner membrane. In terms of biological role, high-affinity transporter for guanine and hypoxanthine. This Escherichia coli O157:H7 protein is Guanine/hypoxanthine permease GhxP (ghxP).